A 286-amino-acid chain; its full sequence is Protein MGF 360-3L (286 aa).

Residues 1 to 17 (MKVLLELLLGYSVLILA) traverse the membrane as a helical segment. Asn-61 is a glycosylation site (N-linked (GlcNAc...) asparagine; by host). The next 2 helical transmembrane spans lie at 128-148 (HCCFYLVFSIAFVGYIVFVYN) and 153-173 (LNTTMKLLALLSILIWLSQPA). N-linked (GlcNAc...) asparagine; by host glycosylation is found at Asn-238 and Asn-263.

It belongs to the asfivirus MGF 110 family.

It is found in the host membrane. Its function is as follows. Plays a role in virus cell tropism, and may be required for efficient virus replication in macrophages. The polypeptide is Protein MGF 360-3L (African swine fever virus (isolate Tick/Malawi/Lil 20-1/1983) (ASFV)).